We begin with the raw amino-acid sequence, 62 residues long: Large ribosomal subunit protein bL28 (62 aa).

Positions 1 to 23 (MARRCFVTGKSAKAGNARSHSMR) are disordered.

It belongs to the bacterial ribosomal protein bL28 family.

In Brevibacillus brevis (strain 47 / JCM 6285 / NBRC 100599), this protein is Large ribosomal subunit protein bL28.